Reading from the N-terminus, the 274-residue chain is Large ribosomal subunit protein uL2c (274 aa).

Positions 230 to 252 (HPHGGGEGRSPIGRSKPLTPWGK) are disordered.

Belongs to the universal ribosomal protein uL2 family. As to quaternary structure, part of the 50S ribosomal subunit.

It is found in the plastid. The chain is Large ribosomal subunit protein uL2c (rpl2) from Euglena longa (Euglenophycean alga).